We begin with the raw amino-acid sequence, 344 residues long: Transcription factor AIG1 (344 aa).

A bHLH domain is found at 131–180 (AASKSHSEAERRRRERINTHLAKLRSILPNTTKTDKASLLAEVIQHMKEL). The interval 313–344 (NDESNDNNNLEKSSSGGIKRQRTSKMVNRCYN) is disordered. The span at 318–327 (DNNNLEKSSS) shows a compositional bias: low complexity.

In terms of assembly, homodimer. Interacts with LHW.

It is found in the nucleus. Transcription factor required for MONOPTEROS-dependent root initiation in embryo. Transcriptionally controlled by MONOPTEROS. The protein is Transcription factor AIG1 (BHLH32) of Arabidopsis thaliana (Mouse-ear cress).